The primary structure comprises 55 residues: Accessory gland-specific peptide 70A (55 aa).

Residues 1 to 19 (MKTLSVFLVLVCLLGLVQS) form the signal peptide. A hydroxyproline mark is found at P28, P32, P34, and P38. A disulfide bridge connects residues C43 and C55.

Main cells of the accessory glands of males (paragonial gland).

The protein localises to the secreted. In terms of biological role, represses female sexual receptivity and stimulates oviposition. This Drosophila sechellia (Fruit fly) protein is Accessory gland-specific peptide 70A (Acp70A).